The chain runs to 283 residues: Elongation factor Ts (283 aa).

The segment at 80-83 is involved in Mg(2+) ion dislocation from EF-Tu; the sequence is TDFV.

It belongs to the EF-Ts family.

The protein resides in the cytoplasm. Associates with the EF-Tu.GDP complex and induces the exchange of GDP to GTP. It remains bound to the aminoacyl-tRNA.EF-Tu.GTP complex up to the GTP hydrolysis stage on the ribosome. The chain is Elongation factor Ts from Haemophilus influenzae (strain 86-028NP).